The following is a 305-amino-acid chain: Methionyl-tRNA formyltransferase (305 aa).

111–114 provides a ligand contact to (6S)-5,6,7,8-tetrahydrofolate; it reads SLLP.

It belongs to the Fmt family.

The catalysed reaction is L-methionyl-tRNA(fMet) + (6R)-10-formyltetrahydrofolate = N-formyl-L-methionyl-tRNA(fMet) + (6S)-5,6,7,8-tetrahydrofolate + H(+). Its function is as follows. Attaches a formyl group to the free amino group of methionyl-tRNA(fMet). The formyl group appears to play a dual role in the initiator identity of N-formylmethionyl-tRNA by promoting its recognition by IF2 and preventing the misappropriation of this tRNA by the elongation apparatus. This chain is Methionyl-tRNA formyltransferase, found in Campylobacter jejuni (strain RM1221).